Consider the following 267-residue polypeptide: 4-hydroxy-tetrahydrodipicolinate reductase (267 aa).

NAD(+)-binding positions include 8-13 (GAAGRM) and D34. R35 contacts NADP(+). NAD(+) is bound by residues 98–100 (GTT) and 122–125 (AANF). H155 serves as the catalytic Proton donor/acceptor. H156 contacts (S)-2,3,4,5-tetrahydrodipicolinate. Catalysis depends on K159, which acts as the Proton donor. 165–166 (GT) contributes to the (S)-2,3,4,5-tetrahydrodipicolinate binding site.

Belongs to the DapB family.

Its subcellular location is the cytoplasm. It catalyses the reaction (S)-2,3,4,5-tetrahydrodipicolinate + NAD(+) + H2O = (2S,4S)-4-hydroxy-2,3,4,5-tetrahydrodipicolinate + NADH + H(+). The catalysed reaction is (S)-2,3,4,5-tetrahydrodipicolinate + NADP(+) + H2O = (2S,4S)-4-hydroxy-2,3,4,5-tetrahydrodipicolinate + NADPH + H(+). It functions in the pathway amino-acid biosynthesis; L-lysine biosynthesis via DAP pathway; (S)-tetrahydrodipicolinate from L-aspartate: step 4/4. Functionally, catalyzes the conversion of 4-hydroxy-tetrahydrodipicolinate (HTPA) to tetrahydrodipicolinate. The chain is 4-hydroxy-tetrahydrodipicolinate reductase from Pseudomonas amygdali pv. tabaci (Pseudomonas syringae pv. tabaci).